The sequence spans 295 residues: ATP synthase gamma chain (295 aa).

Belongs to the ATPase gamma chain family. In terms of assembly, F-type ATPases have 2 components, CF(1) - the catalytic core - and CF(0) - the membrane proton channel. CF(1) has five subunits: alpha(3), beta(3), gamma(1), delta(1), epsilon(1). CF(0) has three main subunits: a, b and c.

It localises to the cell inner membrane. Functionally, produces ATP from ADP in the presence of a proton gradient across the membrane. The gamma chain is believed to be important in regulating ATPase activity and the flow of protons through the CF(0) complex. This Aliarcobacter butzleri (strain RM4018) (Arcobacter butzleri) protein is ATP synthase gamma chain.